The sequence spans 707 residues: Polyribonucleotide nucleotidyltransferase (707 aa).

2 residues coordinate Mg(2+): aspartate 491 and aspartate 497. Residues 558 to 617 (PRIEKIKIHPDKIGLLIGPGGKTIKKISAESGAEITIEDDGTVMIYSSSADSLEAAREMI) enclose the KH domain. In terms of domain architecture, S1 motif spans 622–695 (GEVTVGGIYR…EKGRYKFSRK (74 aa)).

This sequence belongs to the polyribonucleotide nucleotidyltransferase family. Requires Mg(2+) as cofactor.

It is found in the cytoplasm. It carries out the reaction RNA(n+1) + phosphate = RNA(n) + a ribonucleoside 5'-diphosphate. Involved in mRNA degradation. Catalyzes the phosphorolysis of single-stranded polyribonucleotides processively in the 3'- to 5'-direction. The sequence is that of Polyribonucleotide nucleotidyltransferase from Methylacidiphilum infernorum (isolate V4) (Methylokorus infernorum (strain V4)).